A 146-amino-acid chain; its full sequence is Hemoglobin subunit beta (146 aa).

Positions 2–146 (PFSAHEEKLI…VAAALSVEYY (145 aa)) constitute a Globin domain. Heme b-binding residues include H63 and H92.

This sequence belongs to the globin family. In terms of assembly, heterotetramer of two alpha chains and two beta chains. When oxygenated in vitro, exists virtually only in polymeric form. When deoxygenated, forms tetramers, octamers and larger polymers. In terms of tissue distribution, red blood cells.

In terms of biological role, involved in oxygen transport from the lung to the various peripheral tissues. This chain is Hemoglobin subunit beta, found in Paleosuchus palpebrosus (Cuvier's smooth-fronted caiman).